Reading from the N-terminus, the 593-residue chain is Pyruvate decarboxylase 1 (593 aa).

The segment covering 1–19 (METETETPNGSTPCPTSAP) has biased composition (polar residues). The disordered stretch occupies residues 1–20 (METETETPNGSTPCPTSAPS). Positions 55 and 142 each coordinate substrate. Residues 420 to 502 (DSWFNCQKLR…FLINNGGYTI (83 aa)) are thiamine pyrophosphate binding. 3 residues coordinate Mg(2+): D470, N497, and G499. E503 contacts substrate.

Belongs to the TPP enzyme family. In terms of assembly, homotetramer. A metal cation is required as a cofactor. The cofactor is thiamine diphosphate.

It catalyses the reaction a 2-oxocarboxylate + H(+) = an aldehyde + CO2. This chain is Pyruvate decarboxylase 1 (PDC1), found in Pisum sativum (Garden pea).